The primary structure comprises 421 residues: Carboxypeptidase A4 (421 aa).

Residues 1–16 (MRWILFIGALIGSSIC) form the signal peptide. Residues 17-113 (GQEKFFGDQV…EMQHNEGQER (97 aa)) constitute a propeptide, activation peptide. A protein-binding residues include Pro69, Val71, Asn119, Tyr123, His124, Ser125, Glu127, and Phe163. Residues 122–416 (AYHSLEAIYH…LGLKTIMEHV (295 aa)) form the Peptidase M14 domain. 2 residues coordinate Zn(2+): His181 and Glu184. A protein is bound by residues Arg196, Lys197, and Ser248. An intrachain disulfide couples Cys250 to Cys273. N-linked (GlcNAc...) asparagine glycosylation occurs at Asn260. Asp270 provides a ligand contact to a protein. Residue His308 coordinates Zn(2+). Glu382 (proton donor/acceptor) is an active-site residue.

Belongs to the peptidase M14 family. Monomer. Interacts with LXN. Zn(2+) is required as a cofactor. In terms of tissue distribution, fetal expression in the adrenal gland, brain, heart, intestine, kidney, liver and lung. Except for fetal brain that shows no imprinting, expression was found preferentially from the maternal allele.

The protein localises to the secreted. Its activity is regulated as follows. Inhibited by interaction with the metallocarboxypeptidase inhibitor (MCPI) from N.versicolor that binds to the catalytic zinc ion. Also inhibited by interaction with the S.magnifica carboxypeptidase inhibitor SmCI that penetrates the active site groove and inhibits activity by emulating a C-terminal substrate. Additionally inhibited by a carboxypeptidase inhibitor from H.medicinalis (leech) and R.bursa (tick). Metalloprotease that cleaves hydrophobic C-terminal residues with a preference for -Phe, -Leu, -Ile, -Met, -Tyr and -Val. May function in peptide hormone and/or neuropeptide catabolism. The protein is Carboxypeptidase A4 (CPA4) of Homo sapiens (Human).